A 129-amino-acid chain; its full sequence is Small ribosomal subunit protein uS11 (129 aa).

Belongs to the universal ribosomal protein uS11 family. Part of the 30S ribosomal subunit. Interacts with proteins S7 and S18. Binds to IF-3.

Located on the platform of the 30S subunit, it bridges several disparate RNA helices of the 16S rRNA. Forms part of the Shine-Dalgarno cleft in the 70S ribosome. This Francisella tularensis subsp. holarctica (strain FTNF002-00 / FTA) protein is Small ribosomal subunit protein uS11.